A 299-amino-acid chain; its full sequence is N-acetylmuramic acid 6-phosphate etherase (299 aa).

The SIS domain maps to Thr-54–Lys-217. Glu-82 serves as the catalytic Proton donor. Residue Glu-113 is part of the active site.

Belongs to the GCKR-like family. MurNAc-6-P etherase subfamily. Homodimer.

It catalyses the reaction N-acetyl-D-muramate 6-phosphate + H2O = N-acetyl-D-glucosamine 6-phosphate + (R)-lactate. It functions in the pathway amino-sugar metabolism; N-acetylmuramate degradation. Functionally, specifically catalyzes the cleavage of the D-lactyl ether substituent of MurNAc 6-phosphate, producing GlcNAc 6-phosphate and D-lactate. The protein is N-acetylmuramic acid 6-phosphate etherase of Staphylococcus aureus (strain USA300).